The following is a 336-amino-acid chain: Glyceraldehyde-3-phosphate dehydrogenase (336 aa).

Residues 12 to 13 (RI), D34, R78, and T121 each bind NAD(+). D-glyceraldehyde 3-phosphate-binding positions include 151–153 (SCT), T182, R199, 212–213 (TG), and R235. C152 acts as the Nucleophile in catalysis. N316 serves as a coordination point for NAD(+).

This sequence belongs to the glyceraldehyde-3-phosphate dehydrogenase family. Homotetramer.

It is found in the cytoplasm. It carries out the reaction D-glyceraldehyde 3-phosphate + phosphate + NAD(+) = (2R)-3-phospho-glyceroyl phosphate + NADH + H(+). It participates in carbohydrate degradation; glycolysis; pyruvate from D-glyceraldehyde 3-phosphate: step 1/5. Also binds human plasminogen. Functionally, catalyzes the oxidative phosphorylation of glyceraldehyde 3-phosphate (G3P) to 1,3-bisphosphoglycerate (BPG) using the cofactor NAD. The first reaction step involves the formation of a hemiacetal intermediate between G3P and a cysteine residue, and this hemiacetal intermediate is then oxidized to a thioester, with concomitant reduction of NAD to NADH. The reduced NADH is then exchanged with the second NAD, and the thioester is attacked by a nucleophilic inorganic phosphate to produce BPG. In Streptococcus pyogenes, this protein is Glyceraldehyde-3-phosphate dehydrogenase (gap).